We begin with the raw amino-acid sequence, 408 residues long: 8-amino-7-oxononanoate synthase (408 aa).

Arg20 is a binding site for substrate. 117–118 contributes to the pyridoxal 5'-phosphate binding site; the sequence is GY. His142 contacts substrate. Ser188, His216, and Thr244 together coordinate pyridoxal 5'-phosphate. Lys247 carries the N6-(pyridoxal phosphate)lysine modification. Thr367 contacts substrate.

The protein belongs to the class-II pyridoxal-phosphate-dependent aminotransferase family. BioF subfamily. As to quaternary structure, homodimer. Pyridoxal 5'-phosphate serves as cofactor.

The enzyme catalyses 6-carboxyhexanoyl-[ACP] + L-alanine + H(+) = (8S)-8-amino-7-oxononanoate + holo-[ACP] + CO2. It participates in cofactor biosynthesis; biotin biosynthesis. Its function is as follows. Catalyzes the decarboxylative condensation of pimeloyl-[acyl-carrier protein] and L-alanine to produce 8-amino-7-oxononanoate (AON), [acyl-carrier protein], and carbon dioxide. The polypeptide is 8-amino-7-oxononanoate synthase (Cupriavidus pinatubonensis (strain JMP 134 / LMG 1197) (Cupriavidus necator (strain JMP 134))).